Here is a 264-residue protein sequence, read N- to C-terminus: 3-methyl-2-oxobutanoate hydroxymethyltransferase (264 aa).

Mg(2+) contacts are provided by aspartate 45 and aspartate 84. 3-methyl-2-oxobutanoate is bound by residues aspartate 45–serine 46, aspartate 84, and lysine 112. Glutamate 114 provides a ligand contact to Mg(2+). Glutamate 181 functions as the Proton acceptor in the catalytic mechanism.

This sequence belongs to the PanB family. In terms of assembly, homodecamer; pentamer of dimers. Requires Mg(2+) as cofactor.

The protein localises to the cytoplasm. The catalysed reaction is 3-methyl-2-oxobutanoate + (6R)-5,10-methylene-5,6,7,8-tetrahydrofolate + H2O = 2-dehydropantoate + (6S)-5,6,7,8-tetrahydrofolate. The protein operates within cofactor biosynthesis; (R)-pantothenate biosynthesis; (R)-pantoate from 3-methyl-2-oxobutanoate: step 1/2. Functionally, catalyzes the reversible reaction in which hydroxymethyl group from 5,10-methylenetetrahydrofolate is transferred onto alpha-ketoisovalerate to form ketopantoate. The sequence is that of 3-methyl-2-oxobutanoate hydroxymethyltransferase from Alteromonas mediterranea (strain DSM 17117 / CIP 110805 / LMG 28347 / Deep ecotype).